A 501-amino-acid polypeptide reads, in one-letter code: 2,3-bisphosphoglycerate-independent phosphoglycerate mutase (501 aa).

Mn(2+)-binding residues include Asp-12 and Ser-62. The active-site Phosphoserine intermediate is Ser-62. Substrate is bound by residues His-121, 150–151, Arg-182, Arg-188, 253–256, and Lys-322; these read RD and RSDR. Positions 389, 393, 430, 431, and 449 each coordinate Mn(2+).

This sequence belongs to the BPG-independent phosphoglycerate mutase family. As to quaternary structure, monomer. The cofactor is Mn(2+).

The catalysed reaction is (2R)-2-phosphoglycerate = (2R)-3-phosphoglycerate. It functions in the pathway carbohydrate degradation; glycolysis; pyruvate from D-glyceraldehyde 3-phosphate: step 3/5. Functionally, catalyzes the interconversion of 2-phosphoglycerate and 3-phosphoglycerate. The chain is 2,3-bisphosphoglycerate-independent phosphoglycerate mutase from Ehrlichia ruminantium (strain Welgevonden).